The chain runs to 446 residues: Adenylosuccinate synthetase (446 aa).

GTP-binding positions include 20–26 (GDEGKGK) and 48–50 (GHT). Aspartate 21 acts as the Proton acceptor in catalysis. Mg(2+)-binding residues include aspartate 21 and glycine 48. Residues 21–24 (DEGK), 46–49 (NAGH), threonine 137, arginine 151, glutamine 232, threonine 247, and arginine 319 each bind IMP. Histidine 49 acts as the Proton donor in catalysis. 315–321 (SVTGRPR) provides a ligand contact to substrate. GTP-binding positions include arginine 321, 347-349 (KLD), and 429-431 (STG).

This sequence belongs to the adenylosuccinate synthetase family. Homodimer. The cofactor is Mg(2+).

The protein resides in the cytoplasm. It carries out the reaction IMP + L-aspartate + GTP = N(6)-(1,2-dicarboxyethyl)-AMP + GDP + phosphate + 2 H(+). It functions in the pathway purine metabolism; AMP biosynthesis via de novo pathway; AMP from IMP: step 1/2. Plays an important role in the de novo pathway of purine nucleotide biosynthesis. Catalyzes the first committed step in the biosynthesis of AMP from IMP. This chain is Adenylosuccinate synthetase, found in Polynucleobacter asymbioticus (strain DSM 18221 / CIP 109841 / QLW-P1DMWA-1) (Polynucleobacter necessarius subsp. asymbioticus).